Reading from the N-terminus, the 428-residue chain is Glutamate-1-semialdehyde 2,1-aminomutase (428 aa).

Lys265 bears the N6-(pyridoxal phosphate)lysine mark.

This sequence belongs to the class-III pyridoxal-phosphate-dependent aminotransferase family. HemL subfamily. Homodimer. Requires pyridoxal 5'-phosphate as cofactor.

It is found in the cytoplasm. The enzyme catalyses (S)-4-amino-5-oxopentanoate = 5-aminolevulinate. It functions in the pathway porphyrin-containing compound metabolism; protoporphyrin-IX biosynthesis; 5-aminolevulinate from L-glutamyl-tRNA(Glu): step 2/2. The sequence is that of Glutamate-1-semialdehyde 2,1-aminomutase from Shewanella sediminis (strain HAW-EB3).